The primary structure comprises 283 residues: Shikimate dehydrogenase (NADP(+)) (283 aa).

Shikimate-binding positions include 16–18 (SLS) and T63. The active-site Proton acceptor is the K67. Residue D79 participates in NADP(+) binding. Shikimate is bound by residues N88 and D103. NADP(+) is bound by residues 128–132 (GAGGA), A223, and G243.

The protein belongs to the shikimate dehydrogenase family. In terms of assembly, homodimer.

It catalyses the reaction shikimate + NADP(+) = 3-dehydroshikimate + NADPH + H(+). It participates in metabolic intermediate biosynthesis; chorismate biosynthesis; chorismate from D-erythrose 4-phosphate and phosphoenolpyruvate: step 4/7. Its function is as follows. Involved in the biosynthesis of the chorismate, which leads to the biosynthesis of aromatic amino acids. Catalyzes the reversible NADPH linked reduction of 3-dehydroshikimate (DHSA) to yield shikimate (SA). This Xanthomonas campestris pv. campestris (strain B100) protein is Shikimate dehydrogenase (NADP(+)).